A 470-amino-acid chain; its full sequence is MGYLSCNGESAVAICDTYNWNPRRRSKVPEKRHPPKLRVFNYDELAVATNGFSANNFLGKGSHGRVYKAVLDDGKLLAAVKRTTITTTVGNNNNNVSQVDNEIEILSRVRHRWMVNLIGYCVDHRRKTKLLVVEYMPNGTLHDQLHSRSSLDSRLSSWNRRIKHALQIAIAVHALHTAETQVIHRDIKSCNVLIDGDGNARLADFGLALIGNVDDERLKYTPPAGTLGYLDPSYLAPADLTAKSDVFSFGILLLEIISGREAIDLNYSPSCIVDWAVPLIKRGDYDAICDLKIKNRPYYAVIRKLAVMAARCVRSTAKKRPDMLEVVECLKTVRQLSPAWNKLRRRSEERSENVLAVEEEKEEIHVRIVRGGSRKNRKVSNVTTSVDDVYERLVPEETLPFRRRNFVLRSRSVGAKVGPDPYDGFGDETVVTMRLLIEKERPVTTAAMRLSKSRSVGIVRSHKTASRKRY.

The Protein kinase domain maps to 52-333 (FSANNFLGKG…LEVVECLKTV (282 aa)). ATP is bound by residues 58–66 (LGKGSHGRV) and Lys-81. The active-site Proton acceptor is Asp-186. A phosphothreonine mark is found at Thr-221 and Thr-226. Tyr-234 is modified (phosphotyrosine).

This sequence belongs to the protein kinase superfamily. Ser/Thr protein kinase family.

The enzyme catalyses L-seryl-[protein] + ATP = O-phospho-L-seryl-[protein] + ADP + H(+). It carries out the reaction L-threonyl-[protein] + ATP = O-phospho-L-threonyl-[protein] + ADP + H(+). The protein is Serine/threonine-protein kinase-like protein At1g28390 of Arabidopsis thaliana (Mouse-ear cress).